A 178-amino-acid chain; its full sequence is Protein GrpE (178 aa).

The protein belongs to the GrpE family. In terms of assembly, homodimer.

It is found in the cytoplasm. In terms of biological role, participates actively in the response to hyperosmotic and heat shock by preventing the aggregation of stress-denatured proteins, in association with DnaK and GrpE. It is the nucleotide exchange factor for DnaK and may function as a thermosensor. Unfolded proteins bind initially to DnaJ; upon interaction with the DnaJ-bound protein, DnaK hydrolyzes its bound ATP, resulting in the formation of a stable complex. GrpE releases ADP from DnaK; ATP binding to DnaK triggers the release of the substrate protein, thus completing the reaction cycle. Several rounds of ATP-dependent interactions between DnaJ, DnaK and GrpE are required for fully efficient folding. The polypeptide is Protein GrpE (Rickettsia africae (strain ESF-5)).